Consider the following 453-residue polypeptide: Ribosomal protein uS12 methylthiotransferase RimO (453 aa).

The region spanning proline 5–proline 120 is the MTTase N-terminal domain. Residues cysteine 14, cysteine 50, cysteine 79, cysteine 151, cysteine 155, and cysteine 158 each contribute to the [4Fe-4S] cluster site. Positions leucine 137–asparagine 382 constitute a Radical SAM core domain. The region spanning glutamine 385 to valine 453 is the TRAM domain.

This sequence belongs to the methylthiotransferase family. RimO subfamily. It depends on [4Fe-4S] cluster as a cofactor.

It localises to the cytoplasm. It carries out the reaction L-aspartate(89)-[ribosomal protein uS12]-hydrogen + (sulfur carrier)-SH + AH2 + 2 S-adenosyl-L-methionine = 3-methylsulfanyl-L-aspartate(89)-[ribosomal protein uS12]-hydrogen + (sulfur carrier)-H + 5'-deoxyadenosine + L-methionine + A + S-adenosyl-L-homocysteine + 2 H(+). Functionally, catalyzes the methylthiolation of an aspartic acid residue of ribosomal protein uS12. The protein is Ribosomal protein uS12 methylthiotransferase RimO of Burkholderia cenocepacia (strain HI2424).